Consider the following 533-residue polypeptide: 2-isopropylmalate synthase (533 aa).

Residues I8 to A269 form the Pyruvate carboxyltransferase domain. Mn(2+)-binding residues include D17, H208, H210, and N244. The regulatory domain stretch occupies residues R408–L533.

Belongs to the alpha-IPM synthase/homocitrate synthase family. LeuA type 1 subfamily. As to quaternary structure, homodimer. Mn(2+) serves as cofactor.

It localises to the cytoplasm. The catalysed reaction is 3-methyl-2-oxobutanoate + acetyl-CoA + H2O = (2S)-2-isopropylmalate + CoA + H(+). It functions in the pathway amino-acid biosynthesis; L-leucine biosynthesis; L-leucine from 3-methyl-2-oxobutanoate: step 1/4. In terms of biological role, catalyzes the condensation of the acetyl group of acetyl-CoA with 3-methyl-2-oxobutanoate (2-ketoisovalerate) to form 3-carboxy-3-hydroxy-4-methylpentanoate (2-isopropylmalate). The chain is 2-isopropylmalate synthase from Picosynechococcus sp. (strain ATCC 27264 / PCC 7002 / PR-6) (Agmenellum quadruplicatum).